The following is a 356-amino-acid chain: Phenylalanine--tRNA ligase alpha subunit (356 aa).

Glu-260 serves as a coordination point for Mg(2+).

Belongs to the class-II aminoacyl-tRNA synthetase family. Phe-tRNA synthetase alpha subunit type 1 subfamily. Tetramer of two alpha and two beta subunits. Mg(2+) serves as cofactor.

It is found in the cytoplasm. It catalyses the reaction tRNA(Phe) + L-phenylalanine + ATP = L-phenylalanyl-tRNA(Phe) + AMP + diphosphate + H(+). The protein is Phenylalanine--tRNA ligase alpha subunit of Gluconobacter oxydans (strain 621H) (Gluconobacter suboxydans).